A 345-amino-acid polypeptide reads, in one-letter code: Leucine zipper protein 2 (345 aa).

Residues 1–19 form the signal peptide; sequence MKFNAAHYLLPLLPALVLS. Positions 16–211 form a coiled coil; the sequence is LVLSTRQDYE…QMKAMKETVQ (196 aa). N-linked (GlcNAc...) asparagine glycosylation is present at N133. Positions 164 to 192 are leucine-zipper; it reads LRYGKKDLLFKAQQLTELEQKLAVAKNEL. Residues 223–345 form a disordered region; that stretch reads PPLSLMPSNP…GTPAREEKLL (123 aa). Over residues 261–277 the composition is skewed to basic and acidic residues; it reads GHHDSSQVQATKEESRR. A compositionally biased stretch (polar residues) spans 298–313; the sequence is PQSNSTAESELTTQKL. A glycan (N-linked (GlcNAc...) asparagine) is linked at N301.

As to expression, expression found only in the brain and spinal cord.

The protein localises to the secreted. This chain is Leucine zipper protein 2 (Luzp2), found in Mus musculus (Mouse).